The following is a 455-amino-acid chain: Gamma-aminobutyric acid receptor subunit alpha-1 (455 aa).

Residues 1-27 (MKKSRGLSDYLWAWTLILSTLSGRSYG) form the signal peptide. Over 28-252 (QPSQDELKDN…FHLKRKIGYF (225 aa)) the chain is Extracellular. Asparagine 37 carries N-linked (GlcNAc...) asparagine glycosylation. Arginine 93 is a binding site for 4-aminobutanoate. Asparagine 137 is a glycosylation site (N-linked (GlcNAc...) asparagine). Threonine 156 contributes to the 4-aminobutanoate binding site. A disulfide bridge connects residues cysteine 165 and cysteine 179. Residues 253 to 273 (VIQTYLPCIMTVILSQVSFWL) traverse the membrane as a helical segment. The Cytoplasmic portion of the chain corresponds to 274–278 (NRESV). Residues 279-300 (PARTVFGVTTVLTMTTLSISAR) form a helical membrane-spanning segment. The Extracellular segment spans residues 301–310 (NSLPKVAYAT). The helical transmembrane segment at 311–332 (AMDWFIAVCYAFVFSALIEFAT) threads the bilayer. At 333 to 420 (VNYFTKRGYA…TFNSVSKIDR (88 aa)) the chain is on the cytoplasmic side. A helical transmembrane segment spans residues 421–440 (LSRIAFPLLFGIFNLVYWAT). At 441–455 (YLNREPQLKAPTPHQ) the chain is on the extracellular side.

Belongs to the ligand-gated ion channel (TC 1.A.9) family. Gamma-aminobutyric acid receptor (TC 1.A.9.5) subfamily. GABRA1 sub-subfamily. In terms of assembly, heteropentamer, formed by a combination of alpha (GABRA1-6), beta (GABRB1-3), gamma (GABRG1-3), delta (GABRD), epsilon (GABRE), rho (GABRR1-3), pi (GABRP) and theta (GABRQ) subunits, each subunit exhibiting distinct physiological and pharmacological properties. Interacts with UBQLN1. Interacts with TRAK1. Interacts with KIF21B. Identified in a complex of 720 kDa composed of LHFPL4, NLGN2, GABRA1, GABRB2, GABRG2 and GABRB3. Interacts with LHFPL4. Interacts with NLGN2. Interacts with SHISA7; interaction leads to the regulation of GABA(A) receptor trafficking, channel deactivation kinetics and pharmacology. Post-translationally, glycosylated. As to expression, expressed in the cerebellum.

It is found in the postsynaptic cell membrane. It localises to the cell membrane. The protein resides in the cytoplasmic vesicle membrane. It catalyses the reaction chloride(in) = chloride(out). With respect to regulation, allosterically activated by benzodiazepines, the neuroanesthetic alphaxalone and pentobarbital. Inhibited by the antagonist bicuculline. Potentiated by histamine. Alpha subunit of the heteropentameric ligand-gated chloride channel gated by Gamma-aminobutyric acid (GABA), a major inhibitory neurotransmitter in the brain. GABA-gated chloride channels, also named GABA(A) receptors (GABAAR), consist of five subunits arranged around a central pore and contain GABA active binding site(s) located at the alpha and beta subunit interface(s). When activated by GABA, GABAARs selectively allow the flow of chloride anions across the cell membrane down their electrochemical gradient. Alpha-1/GABRA1-containing GABAARs are largely synaptic. Chloride influx into the postsynaptic neuron following GABAAR opening decreases the neuron ability to generate a new action potential, thereby reducing nerve transmission. GABAARs containing alpha-1 and beta-2 or -3 subunits exhibit synaptogenic activity; the gamma-2 subunit being necessary but not sufficient to induce rapid synaptic contacts formation. GABAARs function also as histamine receptor where histamine binds at the interface of two neighboring beta subunits and potentiates GABA response. GABAARs containing alpha, beta and epsilon subunits also permit spontaneous chloride channel activity while preserving the structural information required for GABA-gated openings. Alpha-1-mediated plasticity in the orbitofrontal cortex regulates context-dependent action selection. Together with rho subunits, may also control neuronal and glial GABAergic transmission in the cerebellum. The chain is Gamma-aminobutyric acid receptor subunit alpha-1 from Mus musculus (Mouse).